A 362-amino-acid polypeptide reads, in one-letter code: Probable dual-specificity RNA methyltransferase RlmN (362 aa).

The Proton acceptor role is filled by Glu-99. The region spanning 105–341 (SPDRHTVCVS…VTVRKSQGAS (237 aa)) is the Radical SAM core domain. Cys-112 and Cys-346 are oxidised to a cystine. [4Fe-4S] cluster is bound by residues Cys-119, Cys-123, and Cys-126. S-adenosyl-L-methionine contacts are provided by residues 171–172 (GE), Ser-204, 227–229 (SLH), and Asn-303. The S-methylcysteine intermediate role is filled by Cys-346.

The protein belongs to the radical SAM superfamily. RlmN family. [4Fe-4S] cluster serves as cofactor.

It is found in the cytoplasm. It catalyses the reaction adenosine(2503) in 23S rRNA + 2 reduced [2Fe-2S]-[ferredoxin] + 2 S-adenosyl-L-methionine = 2-methyladenosine(2503) in 23S rRNA + 5'-deoxyadenosine + L-methionine + 2 oxidized [2Fe-2S]-[ferredoxin] + S-adenosyl-L-homocysteine. It carries out the reaction adenosine(37) in tRNA + 2 reduced [2Fe-2S]-[ferredoxin] + 2 S-adenosyl-L-methionine = 2-methyladenosine(37) in tRNA + 5'-deoxyadenosine + L-methionine + 2 oxidized [2Fe-2S]-[ferredoxin] + S-adenosyl-L-homocysteine. In terms of biological role, specifically methylates position 2 of adenine 2503 in 23S rRNA and position 2 of adenine 37 in tRNAs. This is Probable dual-specificity RNA methyltransferase RlmN from Chlorobium phaeobacteroides (strain BS1).